Reading from the N-terminus, the 864-residue chain is Mitochondrial 15S rRNA processing factor CCM1 (864 aa).

The transit peptide at 1 to 76 directs the protein to the mitochondrion; the sequence is MYMARCGPKN…REFSNTLKER (76 aa). PPR repeat units follow at residues 319-353 and 356-390; these read NKQN…STKH and DICT…NIKP.

This sequence belongs to the CCM1 family. Binds to mitochondrial small subunit 15S rRNA.

It is found in the mitochondrion. Functionally, regulates mitochondrial small subunit maturation by controlling 15S rRNA 5'-end processing. Localizes to the 5' precursor of the 15S rRNA in a position that is subsequently occupied by mS47 in the mature yeast mtSSU. Uses structure and sequence-specific RNA recognition, binding to a single-stranded region of the precursor and specifically recognizing bases -6 to -1. The exchange of Ccm1 for mS47 is coupled to the irreversible removal of precursor rRNA that is accompanied by conformational changes of the mitoribosomal proteins uS5m and mS26. These conformational changes signal completion of 5'-end rRNA processing through protection of the mature 5'-end of the 15S rRNA and stabilization of mS47. The removal of the 5' precursor together with the dissociation of Ccm1 may be catalyzed by the 5'-3' exoribonuclease Pet127. Involved in the specific removal of group I introns in mitochondrial encoded transcripts. This Saccharomyces cerevisiae (strain YJM789) (Baker's yeast) protein is Mitochondrial 15S rRNA processing factor CCM1 (CCM1).